An 842-amino-acid polypeptide reads, in one-letter code: Alanine--tRNA ligase (842 aa).

4 residues coordinate Zn(2+): His-549, His-553, Cys-650, and His-654.

This sequence belongs to the class-II aminoacyl-tRNA synthetase family. Zn(2+) is required as a cofactor.

It localises to the cytoplasm. It carries out the reaction tRNA(Ala) + L-alanine + ATP = L-alanyl-tRNA(Ala) + AMP + diphosphate. In terms of biological role, catalyzes the attachment of alanine to tRNA(Ala) in a two-step reaction: alanine is first activated by ATP to form Ala-AMP and then transferred to the acceptor end of tRNA(Ala). Also edits incorrectly charged Ser-tRNA(Ala) and Gly-tRNA(Ala) via its editing domain. The protein is Alanine--tRNA ligase of Campylobacter jejuni subsp. jejuni serotype O:6 (strain 81116 / NCTC 11828).